A 329-amino-acid polypeptide reads, in one-letter code: MISIAIDAMGGDFGPEPIITGVLDALKHRSFNAVLVGDIQKIKPLIPEDYARFVTYIESSEVFSMGESATDALKRKESSIFKAIELVKNGECKAIVSAGHSGATMSLATLRIGRLKNVARPAIATLMPTSLNKKTLVLDVGANVDCKAEHLFQFAIMGESYAKQIMRVKNPKVGLLSNGEEDCKGNEVTKEAFEMMSKLDSFIGNVEGNQIFDGSVDVIICDGFVGNILLKTSEGVASAISKIIKESVKKSPFATVGALLMKRVFKALKIQIDYDEYGGAPLLGVKDCVIISHGKSSPKAVKNAIFQALKFAESDINRVIEDELSHFVR.

Belongs to the PlsX family. As to quaternary structure, homodimer. Probably interacts with PlsY.

It localises to the cytoplasm. The enzyme catalyses a fatty acyl-[ACP] + phosphate = an acyl phosphate + holo-[ACP]. Its pathway is lipid metabolism; phospholipid metabolism. Its function is as follows. Catalyzes the reversible formation of acyl-phosphate (acyl-PO(4)) from acyl-[acyl-carrier-protein] (acyl-ACP). This enzyme utilizes acyl-ACP as fatty acyl donor, but not acyl-CoA. In Campylobacter fetus subsp. fetus (strain 82-40), this protein is Phosphate acyltransferase.